Reading from the N-terminus, the 288-residue chain is Proteasome subunit beta (288 aa).

The propeptide at 1–57 is removed in mature form; by autocatalysis; that stretch reads MTVDGQVGRWPVSAIPAAYMRPGSGSFTEFLAGAEPHLLPGRAGAQPAGAAPAVPHG. Catalysis depends on T58, which acts as the Nucleophile.

Belongs to the peptidase T1B family. As to quaternary structure, the 20S proteasome core is composed of 14 alpha and 14 beta subunits that assemble into four stacked heptameric rings, resulting in a barrel-shaped structure. The two inner rings, each composed of seven catalytic beta subunits, are sandwiched by two outer rings, each composed of seven alpha subunits. The catalytic chamber with the active sites is on the inside of the barrel. Has a gated structure, the ends of the cylinder being occluded by the N-termini of the alpha-subunits. Is capped by the proteasome-associated ATPase, ARC.

The protein resides in the cytoplasm. It carries out the reaction Cleavage of peptide bonds with very broad specificity.. It functions in the pathway protein degradation; proteasomal Pup-dependent pathway. Its activity is regulated as follows. The formation of the proteasomal ATPase ARC-20S proteasome complex, likely via the docking of the C-termini of ARC into the intersubunit pockets in the alpha-rings, may trigger opening of the gate for substrate entry. Interconversion between the open-gate and close-gate conformations leads to a dynamic regulation of the 20S proteasome proteolysis activity. Its function is as follows. Component of the proteasome core, a large protease complex with broad specificity involved in protein degradation. The protein is Proteasome subunit beta of Nakamurella multipartita (strain ATCC 700099 / DSM 44233 / CIP 104796 / JCM 9543 / NBRC 105858 / Y-104) (Microsphaera multipartita).